We begin with the raw amino-acid sequence, 527 residues long: Glucose-6-phosphate isomerase (527 aa).

Glutamate 323 acts as the Proton donor in catalysis. Residues histidine 352 and lysine 454 contribute to the active site.

Belongs to the GPI family.

The protein localises to the cytoplasm. It carries out the reaction alpha-D-glucose 6-phosphate = beta-D-fructose 6-phosphate. It participates in carbohydrate biosynthesis; gluconeogenesis. It functions in the pathway carbohydrate degradation; glycolysis; D-glyceraldehyde 3-phosphate and glycerone phosphate from D-glucose: step 2/4. Catalyzes the reversible isomerization of glucose-6-phosphate to fructose-6-phosphate. In Prochlorococcus marinus (strain MIT 9301), this protein is Glucose-6-phosphate isomerase.